Here is a 563-residue protein sequence, read N- to C-terminus: Putative cysteine ligase BshC (563 aa).

Residues 474–506 (LEQSLMGTSKQAEKALDTLRQKTQRANRRKHDE) are a coiled coil.

It belongs to the BshC family.

This chain is Putative cysteine ligase BshC, found in Prosthecochloris aestuarii (strain DSM 271 / SK 413).